The sequence spans 613 residues: Chaperone protein DnaK (613 aa).

Positions Met-579–Ser-613 are disordered. Over residues Gln-581 to Ser-597 the composition is skewed to low complexity. The span at Gln-599–Ser-613 shows a compositional bias: basic and acidic residues.

This sequence belongs to the heat shock protein 70 family.

Its function is as follows. Acts as a chaperone. The sequence is that of Chaperone protein DnaK from Thermoplasma volcanium (strain ATCC 51530 / DSM 4299 / JCM 9571 / NBRC 15438 / GSS1).